The chain runs to 237 residues: Bax inhibitor 1 (237 aa).

Topologically, residues 1 to 29 (MNIFDRKINFDALLKFSHITPSTQQHLKK) are cytoplasmic. Lysine 7 participates in a covalent cross-link: Glycyl lysine isopeptide (Lys-Gly) (interchain with G-Cter in ubiquitin). The helical transmembrane segment at 30 to 50 (VYASFALCMFVAAAGAYVHVV) threads the bilayer. Over 51 to 52 (TR) the chain is Lumenal. The chain crosses the membrane as a helical span at residues 53-73 (FIQAGLLSALGSLGLMIWLMA). The Cytoplasmic segment spans residues 74-86 (TPHSHETEQKRLG). Residues 87–107 (LLAGFAFLTGVGLGPALDLCI) form a helical membrane-spanning segment. Over 108–112 (AINPS) the chain is Lumenal. A helical transmembrane segment spans residues 113–133 (ILPTAFMGTAMIFTCFTLSAL). Residues 134-139 (YARRRS) lie on the Cytoplasmic side of the membrane. Residues 140–160 (YLFLGGILMSAMSLMVLSSLG) form a helical membrane-spanning segment. Over 161 to 166 (NLFFGS) the chain is Lumenal. Residues 167–187 (IWLFQANLYVGLVVMCGFVLF) form a helical membrane-spanning segment. The Cytoplasmic portion of the chain corresponds to 188-206 (DTQLIIEKAENGDKDYIWH). The helical intramembrane region spans 207-227 (CVDLFSDFVTLFRKLMMILAM). Residues 228-237 (NEKDKKKEKK) lie on the Cytoplasmic side of the membrane.

Belongs to the BI1 family. Interacts with BCL2 and BCL2L1. Interacts with ERN1. Post-translationally, ubiquitinated by BFAR, leading to proteasomal degradation.

The protein resides in the endoplasmic reticulum membrane. In terms of biological role, endoplasmic reticulum (ER)-resident protein that confers cellular protection as an anti-apoptotic protein by limiting multiple stress-inducing pathways surrounding the endoplasmic reticulum and mitochondria. Inhibits the activities of the key sensor for the endoplasmic reticulum unfolded protein response IRE1alpha/ERN1 both directly and by blocking BAX/BAK binding. Modulates ER calcium homeostasis by acting as a calcium-leak channel. Negatively regulates autophagy and autophagosome formation, especially during periods of nutrient deprivation, and reduces cell survival during starvation. This is Bax inhibitor 1 (TMBIM6) from Sus scrofa (Pig).